Consider the following 97-residue polypeptide: Large ribosomal subunit protein eL37 (97 aa).

At Lys-10 the chain carries N6-acetyllysine. Positions 19, 22, 34, and 37 each coordinate Zn(2+). Residues 19-37 (CRRCGSKAYHLQKSTCGKC) form a C4-type zinc finger. Phosphoserine occurs at positions 96 and 97.

The protein belongs to the eukaryotic ribosomal protein eL37 family. Component of the large ribosomal subunit.

It is found in the cytoplasm. Functionally, component of the large ribosomal subunit. The ribosome is a large ribonucleoprotein complex responsible for the synthesis of proteins in the cell. The polypeptide is Large ribosomal subunit protein eL37 (RPL37) (Bos taurus (Bovine)).